The chain runs to 284 residues: Small ribosomal subunit protein uS2 (284 aa).

Belongs to the universal ribosomal protein uS2 family.

The protein is Small ribosomal subunit protein uS2 (rpsB) of Mycoplasma genitalium (strain ATCC 33530 / DSM 19775 / NCTC 10195 / G37) (Mycoplasmoides genitalium).